An 845-amino-acid chain; its full sequence is Beta-mannosidase B (845 aa).

Asparagine 252 carries N-linked (GlcNAc...) asparagine glycosylation. Glutamate 432 serves as the catalytic Proton donor. 2 N-linked (GlcNAc...) asparagine glycosylation sites follow: asparagine 717 and asparagine 723.

This sequence belongs to the glycosyl hydrolase 2 family. Beta-mannosidase B subfamily.

The enzyme catalyses Hydrolysis of terminal, non-reducing beta-D-mannose residues in beta-D-mannosides.. The protein operates within glycan metabolism; N-glycan degradation. In terms of biological role, exoglycosidase that cleaves the single beta-linked mannose residue from the non-reducing end of beta-mannosidic oligosaccharides of various complexity and length. Prefers mannobiose over mannotriose and has no activity against polymeric mannan. Is also severely restricted by galactosyl substitutions at the +1 subsite. The protein is Beta-mannosidase B (mndB) of Aspergillus fumigatus (strain CBS 144.89 / FGSC A1163 / CEA10) (Neosartorya fumigata).